The primary structure comprises 430 residues: Glutamate-1-semialdehyde 2,1-aminomutase (430 aa).

An N6-(pyridoxal phosphate)lysine modification is found at K265.

The protein belongs to the class-III pyridoxal-phosphate-dependent aminotransferase family. HemL subfamily. In terms of assembly, homodimer. Pyridoxal 5'-phosphate serves as cofactor.

The protein localises to the cytoplasm. The enzyme catalyses (S)-4-amino-5-oxopentanoate = 5-aminolevulinate. It functions in the pathway porphyrin-containing compound metabolism; protoporphyrin-IX biosynthesis; 5-aminolevulinate from L-glutamyl-tRNA(Glu): step 2/2. The chain is Glutamate-1-semialdehyde 2,1-aminomutase from Shewanella baltica (strain OS223).